The sequence spans 42 residues: Pelovaterin (42 aa).

Intrachain disulfides connect C8–C38, C16–C32, and C24–C39.

It is found in the secreted. It localises to the extracellular space. The protein localises to the extracellular matrix. Its function is as follows. Induces the nucleation and stabilization of vaterite, one of the crystalline polymorphs of calcium carbonate. Exhibits strong antimicrobial activity against Pseudomonas aeruginosa and Proteus vulgaris. The polypeptide is Pelovaterin (Pelodiscus sinensis (Chinese softshell turtle)).